The chain runs to 127 residues: Anti-adapter protein IraD (127 aa).

It belongs to the GpW/Gp25 family. IraD subfamily. As to quaternary structure, interacts with RssB.

Its subcellular location is the cytoplasm. Its function is as follows. Inhibits RpoS proteolysis by regulating RssB activity, thereby increasing the stability of the sigma stress factor RpoS during oxidative stress. Its effect on RpoS stability is due to its interaction with RssB, which probably blocks the interaction of RssB with RpoS, and the consequent delivery of the RssB-RpoS complex to the ClpXP protein degradation pathway. The polypeptide is Anti-adapter protein IraD (Escherichia coli O6:K15:H31 (strain 536 / UPEC)).